We begin with the raw amino-acid sequence, 245 residues long: Octanoyltransferase (245 aa).

One can recognise a BPL/LPL catalytic domain in the interval 54 to 238 (GEATELVWLL…AFENIFGETR (185 aa)). Substrate is bound by residues 92–99 (RGGQLTYH), 167–169 (AIG), and 180–182 (GIA). Catalysis depends on Cys198, which acts as the Acyl-thioester intermediate.

This sequence belongs to the LipB family.

The protein localises to the cytoplasm. It catalyses the reaction octanoyl-[ACP] + L-lysyl-[protein] = N(6)-octanoyl-L-lysyl-[protein] + holo-[ACP] + H(+). The protein operates within protein modification; protein lipoylation via endogenous pathway; protein N(6)-(lipoyl)lysine from octanoyl-[acyl-carrier-protein]: step 1/2. Its function is as follows. Catalyzes the transfer of endogenously produced octanoic acid from octanoyl-acyl-carrier-protein onto the lipoyl domains of lipoate-dependent enzymes. Lipoyl-ACP can also act as a substrate although octanoyl-ACP is likely to be the physiological substrate. This Rhodopseudomonas palustris (strain ATCC BAA-98 / CGA009) protein is Octanoyltransferase.